Reading from the N-terminus, the 122-residue chain is Large ribosomal subunit protein uL14 (122 aa).

Belongs to the universal ribosomal protein uL14 family. As to quaternary structure, part of the 50S ribosomal subunit. Forms a cluster with proteins L3 and L19. In the 70S ribosome, L14 and L19 interact and together make contacts with the 16S rRNA in bridges B5 and B8.

In terms of biological role, binds to 23S rRNA. Forms part of two intersubunit bridges in the 70S ribosome. This chain is Large ribosomal subunit protein uL14, found in Rhodospirillum centenum (strain ATCC 51521 / SW).